The following is a 506-amino-acid chain: Alpha-1,3/1,6-mannosyltransferase alg2 (506 aa).

2 helical membrane-spanning segments follow: residues Ser-82 to Leu-104 and Leu-118 to Phe-138. Asn-299 is a glycosylation site (N-linked (GlcNAc...) asparagine). The next 2 membrane-spanning stretches (helical) occupy residues Leu-443 to Val-463 and Leu-481 to Ala-501.

It belongs to the glycosyltransferase group 1 family. Glycosyltransferase 4 subfamily.

The protein localises to the endoplasmic reticulum membrane. It carries out the reaction a beta-D-Man-(1-&gt;4)-beta-D-GlcNAc-(1-&gt;4)-alpha-D-GlcNAc-diphospho-di-trans,poly-cis-dolichol + GDP-alpha-D-mannose = an alpha-D-Man-(1-&gt;3)-beta-D-Man-(1-&gt;4)-beta-D-GlcNAc-(1-&gt;4)-alpha-D-GlcNAc-diphospho-di-trans,poly-cis-dolichol + GDP + H(+). The enzyme catalyses an alpha-D-Man-(1-&gt;3)-beta-D-Man-(1-&gt;4)-beta-D-GlcNAc-(1-&gt;4)-alpha-D-GlcNAc-diphospho-di-trans,poly-cis-dolichol + GDP-alpha-D-mannose = an alpha-D-Man-(1-&gt;3)-[alpha-D-Man-(1-&gt;6)]-beta-D-Man-(1-&gt;4)-beta-D-GlcNAc-(1-&gt;4)-alpha-D-GlcNAc-diphospho-di-trans,poly-cis-dolichol + GDP + H(+). Its pathway is protein modification; protein glycosylation. Functionally, mannosylates Man(2)GlcNAc(2)-dolichol diphosphate and Man(1)GlcNAc(2)-dolichol diphosphate to form Man(3)GlcNAc(2)-dolichol diphosphate. The sequence is that of Alpha-1,3/1,6-mannosyltransferase alg2 (alg2) from Schizosaccharomyces pombe (strain 972 / ATCC 24843) (Fission yeast).